A 506-amino-acid polypeptide reads, in one-letter code: Protein MGF 505-9R (506 aa).

It belongs to the asfivirus MGF 505 family.

Plays a role in virus cell tropism, and may be required for efficient virus replication in macrophages. The protein is Protein MGF 505-9R of African swine fever virus (isolate Tick/South Africa/Pretoriuskop Pr4/1996) (ASFV).